Here is a 253-residue protein sequence, read N- to C-terminus: Low affinity immunoglobulin gamma Fc region receptor III-A (253 aa).

Residues 1-20 (MGQPLPPVALLLLVSASSRA) form the signal peptide. The Extracellular segment spans residues 21–207 (ADVPKALVLL…ISSSVLPWHQ (187 aa)). Ig-like C2-type domains follow at residues 24-90 (PKAL…YRCQ) and 99-189 (PVQL…VTIT). Disulfide bonds link cysteine 47/cysteine 89 and cysteine 128/cysteine 172. Asparagine 56, asparagine 63, asparagine 165, and asparagine 180 each carry an N-linked (GlcNAc...) asparagine glycan. A helical membrane pass occupies residues 208–226 (IAFCLVMGLLLAADTGLYF). Over 227–253 (SVQRDLRSSQRARKEHTLGWSLGSQDK) the chain is Cytoplasmic.

In terms of assembly, forms a heterooligomeric complex with ITAM-containing signaling subunits FCER1G. Interacts (via transmembrane domain) with signaling subunits; this interaction is a prerequisite for receptor complex expression on the cell surface and intracellular signal transduction. Binds the Fc region of antigen-complexed IgG.

The protein localises to the cell membrane. Its function is as follows. Receptor for the invariable Fc fragment of immunoglobulin gamma (IgG). Optimally activated upon binding of clustered antigen-IgG complexes displayed on cell surfaces, triggers lysis of antibody-coated cells, a process known as antibody-dependent cellular cytotoxicity (ADCC). Does not bind free monomeric IgG, thus avoiding inappropriate effector cell activation in the absence of antigenic trigger. Mediates IgG effector functions on natural killer (NK) cells. Binds antigen-IgG complexes generated upon infection and triggers NK cell-dependent cytokine production and degranulation to limit viral load and propagation. Fc-binding subunit that associates with FCER1G adapter to form functional signaling complexes. Following the engagement of antigen-IgG complexes, triggers phosphorylation of immunoreceptor tyrosine-based activation motif (ITAM)-containing adapters with subsequent activation of phosphatidylinositol 3-kinase signaling and sustained elevation of intracellular calcium that ultimately drive NK cell activation. Mediates enhanced ADCC in response to afucosylated IgGs. The sequence is that of Low affinity immunoglobulin gamma Fc region receptor III-A from Oryctolagus cuniculus (Rabbit).